We begin with the raw amino-acid sequence, 100 residues long: U-myrmeciitoxin(01)-Mg7b (100 aa).

A signal peptide spans 1–17 (MKLSCLSLALAIILVLA). The propeptide occupies 18–50 (IVYSPHMEVKALADAEPDAIGFADAFGEADAEP). Ser85 carries O-linked (GalNAc...) serine glycosylation. 2 O-linked (GalNAc...) threonine glycosylation sites follow: Thr94 and Thr95.

The protein belongs to the formicidae venom precursor-01 superfamily. In terms of processing, glycosylation is critical to maintaining the aqueous solubility of this protein, but does not directly contribute to its activity. In terms of tissue distribution, expressed by the venom gland.

It localises to the secreted. The protein resides in the target cell membrane. Functionally, neurotoxin that triggers pain behavior and inflammation in mammals, and is paralytic and lethal to insects. Causes a time-dependent increase in cell leak current. May act by targeting membranes. The polypeptide is U-myrmeciitoxin(01)-Mg7b (Myrmecia gulosa (Red bulldog ant)).